A 366-amino-acid chain; its full sequence is Chorismate synthase (366 aa).

2 residues coordinate NADP(+): R48 and R54. Residues 125–127 (RSS), 238–239 (NA), G278, 293–297 (KPTSS), and R319 each bind FMN.

Belongs to the chorismate synthase family. In terms of assembly, homotetramer. The cofactor is FMNH2.

It catalyses the reaction 5-O-(1-carboxyvinyl)-3-phosphoshikimate = chorismate + phosphate. Its pathway is metabolic intermediate biosynthesis; chorismate biosynthesis; chorismate from D-erythrose 4-phosphate and phosphoenolpyruvate: step 7/7. Catalyzes the anti-1,4-elimination of the C-3 phosphate and the C-6 proR hydrogen from 5-enolpyruvylshikimate-3-phosphate (EPSP) to yield chorismate, which is the branch point compound that serves as the starting substrate for the three terminal pathways of aromatic amino acid biosynthesis. This reaction introduces a second double bond into the aromatic ring system. This is Chorismate synthase from Paraburkholderia phytofirmans (strain DSM 17436 / LMG 22146 / PsJN) (Burkholderia phytofirmans).